We begin with the raw amino-acid sequence, 185 residues long: Ribosome-recycling factor (185 aa).

Belongs to the RRF family.

The protein resides in the cytoplasm. Functionally, responsible for the release of ribosomes from messenger RNA at the termination of protein biosynthesis. May increase the efficiency of translation by recycling ribosomes from one round of translation to another. In Trichlorobacter lovleyi (strain ATCC BAA-1151 / DSM 17278 / SZ) (Geobacter lovleyi), this protein is Ribosome-recycling factor.